A 360-amino-acid chain; its full sequence is Phospho-N-acetylmuramoyl-pentapeptide-transferase (360 aa).

Helical transmembrane passes span 25-45, 73-93, 97-117, 135-155, 170-190, 199-219, 236-256, 263-283, 288-308, and 338-358; these read RGIL…PWMI, TMGG…WADL, YVWV…VDDY, FWQS…APSA, IPLG…SSNA, GLAI…CYLS, AGEL…FLWF, VFMG…MAVI, MVLF…VIQV, and VIVR…ATLK.

Belongs to the glycosyltransferase 4 family. MraY subfamily. The cofactor is Mg(2+).

It is found in the cell inner membrane. It carries out the reaction UDP-N-acetyl-alpha-D-muramoyl-L-alanyl-gamma-D-glutamyl-meso-2,6-diaminopimeloyl-D-alanyl-D-alanine + di-trans,octa-cis-undecaprenyl phosphate = di-trans,octa-cis-undecaprenyl diphospho-N-acetyl-alpha-D-muramoyl-L-alanyl-D-glutamyl-meso-2,6-diaminopimeloyl-D-alanyl-D-alanine + UMP. Its pathway is cell wall biogenesis; peptidoglycan biosynthesis. Functionally, catalyzes the initial step of the lipid cycle reactions in the biosynthesis of the cell wall peptidoglycan: transfers peptidoglycan precursor phospho-MurNAc-pentapeptide from UDP-MurNAc-pentapeptide onto the lipid carrier undecaprenyl phosphate, yielding undecaprenyl-pyrophosphoryl-MurNAc-pentapeptide, known as lipid I. The sequence is that of Phospho-N-acetylmuramoyl-pentapeptide-transferase from Pseudomonas syringae pv. syringae (strain B728a).